Here is a 394-residue protein sequence, read N- to C-terminus: Lipid-A-disaccharide synthase (394 aa).

It belongs to the LpxB family.

The catalysed reaction is 2-N,3-O-bis[(3R)-3-hydroxytetradecanoyl]-alpha-D-glucosaminyl 1-phosphate + UDP-2-N,3-O-bis[(3R)-3-hydroxytetradecanoyl]-alpha-D-glucosamine = lipid A disaccharide (E. coli) + UDP + H(+). It catalyses the reaction a lipid X + a UDP-2-N,3-O-bis[(3R)-3-hydroxyacyl]-alpha-D-glucosamine = a lipid A disaccharide + UDP + H(+). It participates in glycolipid biosynthesis; lipid IV(A) biosynthesis; lipid IV(A) from (3R)-3-hydroxytetradecanoyl-[acyl-carrier-protein] and UDP-N-acetyl-alpha-D-glucosamine: step 5/6. Its function is as follows. Condensation of UDP-2,3-diacylglucosamine and 2,3-diacylglucosamine-1-phosphate to form lipid A disaccharide, a precursor of lipid A, a phosphorylated glycolipid that anchors the lipopolysaccharide to the outer membrane of the cell. The protein is Lipid-A-disaccharide synthase of Yersinia pestis.